Reading from the N-terminus, the 561-residue chain is FAD-binding monooxygenase tazF (561 aa).

FAD is bound by residues 74 to 77 (TWLD), 86 to 87 (DI), and Tyr-92. 84–86 (GCD) provides a ligand contact to NADP(+). Residues 212-218 (NGSSALQ) and 235-236 (RH) contribute to the NADP(+) site.

This sequence belongs to the FAD-binding monooxygenase family. It depends on FAD as a cofactor.

Its pathway is secondary metabolite biosynthesis. Functionally, FAD-binding monooxygenase; part of the gene cluster that mediates the biosynthesis of azaterrilone A and other azaphilones, a class of fungal metabolites characterized by a highly oxygenated pyrano-quinone bicyclic core and exhibiting a broad range of bioactivities. The first step of the pathway begins with the non-reducing polyketide synthase tazA that assembles one acetyl-CoA starter unit, five malonyl-CoA units, and catalyzes a series of Claisen condensations, methylation, PT-mediated cyclization, and finally releases the first hexaketide precursor through the R-domain. The tazA product then undergoes reduction on its terminal ketone and the following pyran-ring formation by yet undetermined enzyme(s). Dehydration and enoyl reduction, possibly involving the trans-enoyl reductase tazE leads to the next intermediate. TazD is predicted as an acetyltransferase and might catalyze the acetylation steps leading to the synthesis of azaterrilone A. Azaterrilone A is not the final product of the taz pathway and both the highly reducing polyketide synthase tazB and the dual enzyme tazHJ catalyze late steps of the pathway, leading to the production of the 2 final stereoisomers that contain additional polyketide modification whose structures have still to be determined. The polypeptide is FAD-binding monooxygenase tazF (Aspergillus terreus (strain NIH 2624 / FGSC A1156)).